The chain runs to 258 residues: Indole-3-glycerol phosphate synthase (258 aa).

Belongs to the TrpC family.

The enzyme catalyses 1-(2-carboxyphenylamino)-1-deoxy-D-ribulose 5-phosphate + H(+) = (1S,2R)-1-C-(indol-3-yl)glycerol 3-phosphate + CO2 + H2O. Its pathway is amino-acid biosynthesis; L-tryptophan biosynthesis; L-tryptophan from chorismate: step 4/5. This Chlorobium phaeovibrioides (strain DSM 265 / 1930) (Prosthecochloris vibrioformis (strain DSM 265)) protein is Indole-3-glycerol phosphate synthase.